We begin with the raw amino-acid sequence, 255 residues long: MAEPTEKRLVSETGVAARVAQIVEGPIEGLGFRLVRVKISNTNGCTVQIMAERPDGTMGVDECETVSRAISPILDLEDPVGGAYYLEISSPGIDRPLVRVSDFERWAGYEAKVELAVPMDGRKRFRGILGVPSADGATVPIDLPDVKPGLPSRIDLPLRDLGEAHLVLTDDLIRESLRRGSAPPQDGEDVDEEAGEAPEDEVPQVRFIPQPKRPKPKMDKKSDKKSDKPVKAKKPKPGGGIVTKAARLKNRDTLH.

The segment at 177–255 is disordered; the sequence is LRRGSAPPQD…ARLKNRDTLH (79 aa). Residues 186–202 show a composition bias toward acidic residues; sequence DGEDVDEEAGEAPEDEV. The segment covering 216–230 has biased composition (basic and acidic residues); the sequence is PKMDKKSDKKSDKPV.

The protein belongs to the RimP family.

It is found in the cytoplasm. Functionally, required for maturation of 30S ribosomal subunits. This Methylorubrum populi (strain ATCC BAA-705 / NCIMB 13946 / BJ001) (Methylobacterium populi) protein is Ribosome maturation factor RimP.